The primary structure comprises 242 residues: UPF0246 protein SP_1547 (242 aa).

Belongs to the UPF0246 family.

This is UPF0246 protein SP_1547 from Streptococcus pneumoniae serotype 4 (strain ATCC BAA-334 / TIGR4).